Consider the following 624-residue polypeptide: Glucoamylase (624 aa).

Residues 1–18 (MRQFLALAAAASIAVADS) form the signal peptide. The region spanning 26 to 132 (NSPPDDKAVA…NSQQLNVQVE (107 aa)) is the CBM21 domain. Residues Asn-54, Asn-70, Asn-98, Asn-111, Asn-168, Asn-267, and Asn-333 are each glycosylated (N-linked (GlcNAc...) asparagine). Asp-340 functions as the Proton acceptor in the catalytic mechanism. Glu-343 serves as the catalytic Proton donor. N-linked (GlcNAc...) asparagine glycans are attached at residues Asn-460 and Asn-582.

Belongs to the glycosyl hydrolase 15 family.

The catalysed reaction is Hydrolysis of terminal (1-&gt;4)-linked alpha-D-glucose residues successively from non-reducing ends of the chains with release of beta-D-glucose.. The polypeptide is Glucoamylase (GAA) (Blastobotrys adeninivorans (Yeast)).